The primary structure comprises 82 residues: Small ribosomal subunit protein uS17 (82 aa).

It belongs to the universal ribosomal protein uS17 family. In terms of assembly, part of the 30S ribosomal subunit.

Its function is as follows. One of the primary rRNA binding proteins, it binds specifically to the 5'-end of 16S ribosomal RNA. The polypeptide is Small ribosomal subunit protein uS17 (Phenylobacterium zucineum (strain HLK1)).